The chain runs to 315 residues: Methionyl-tRNA formyltransferase (315 aa).

(6S)-5,6,7,8-tetrahydrofolate is bound at residue 113-116; that stretch reads SLLP.

Belongs to the Fmt family.

The enzyme catalyses L-methionyl-tRNA(fMet) + (6R)-10-formyltetrahydrofolate = N-formyl-L-methionyl-tRNA(fMet) + (6S)-5,6,7,8-tetrahydrofolate + H(+). Its function is as follows. Attaches a formyl group to the free amino group of methionyl-tRNA(fMet). The formyl group appears to play a dual role in the initiator identity of N-formylmethionyl-tRNA by promoting its recognition by IF2 and preventing the misappropriation of this tRNA by the elongation apparatus. In Erwinia tasmaniensis (strain DSM 17950 / CFBP 7177 / CIP 109463 / NCPPB 4357 / Et1/99), this protein is Methionyl-tRNA formyltransferase.